The primary structure comprises 1136 residues: Receptor-type guanylate cyclase gcy-4 (1136 aa).

The signal sequence occupies residues 1–21 (MRQLNYYIFISTILTYNLTHG). At 22-485 (QGPRPVIRVG…CPLPIFEQYR (464 aa)) the chain is on the extracellular side. Residues N40, N194, N252, N351, N377, N386, and N438 are each glycosylated (N-linked (GlcNAc...) asparagine). Residues 486-506 (ALVIVAIAVTILILLAIIICM) traverse the membrane as a helical segment. The Cytoplasmic segment spans residues 507 to 1136 (SSKIRNRRVE…LRREMMRVEV (630 aa)). Positions 533–833 (LPMHRRASKS…EDNLMDHVFS (301 aa)) constitute a Protein kinase domain. The tract at residues 536–565 (HRRASKSSQESETESASETENFTSKSGDTM) is disordered. The Guanylate cyclase domain occupies 891–1021 (TVFFSDLVKF…DTVNTASRME (131 aa)).

Belongs to the adenylyl cyclase class-4/guanylyl cyclase family. In terms of tissue distribution, expression is biased toward ASE right (ASER) sensory neuron.

Its subcellular location is the cell membrane. It catalyses the reaction GTP = 3',5'-cyclic GMP + diphosphate. Functionally, guanylate cyclase involved in the production of the second messenger cGMP. Regulates chemotaxis responses toward Br(1-) and I(1-) salt ions in ASE right (ASER) sensory neuron. The chain is Receptor-type guanylate cyclase gcy-4 from Caenorhabditis elegans.